The following is a 192-amino-acid chain: MAPTEITFVTGNANKLKEVQMLLAAEDKKGSITLKNEPLDLDELQDVDLKAIALTKCKQAVKELGVGTPVFVEDTALTFDEFNGLPGAYIKWFLKSMSLEKIVKLLEPYSNKGAEAITTIAYCDENGEYHIFQGITKGKIVDSRGPTNFGWDSIFEPLEGKGMTYAEMEKDFKNTLSHRGKAFVEFKKFLYA.

10–15 provides a ligand contact to ITP; the sequence is TGNANK. Glu-43 contacts Mg(2+). ITP-binding positions include Lys-56, 74–75, Lys-91, 149–152, Lys-173, and 178–179; these read DT, FGWD, and HR.

This sequence belongs to the HAM1 NTPase family. Homodimer. It depends on Mg(2+) as a cofactor. Requires Mn(2+) as cofactor.

The protein localises to the cytoplasm. It localises to the nucleus. The enzyme catalyses ITP + H2O = IMP + diphosphate + H(+). It carries out the reaction dITP + H2O = dIMP + diphosphate + H(+). The catalysed reaction is XTP + H2O = XMP + diphosphate + H(+). Pyrophosphatase that hydrolyzes non-canonical purine nucleotides such as inosine triphosphate (ITP), deoxyinosine triphosphate (dITP) or xanthosine 5'-triphosphate (XTP) to their respective monophosphate derivatives. The enzyme does not distinguish between the deoxy- and ribose forms. Probably excludes non-canonical purines from RNA and DNA precursor pools, thus preventing their incorporation into RNA and DNA and avoiding chromosomal lesions. The chain is Inosine triphosphate pyrophosphatase from Candida glabrata (strain ATCC 2001 / BCRC 20586 / JCM 3761 / NBRC 0622 / NRRL Y-65 / CBS 138) (Yeast).